Here is a 459-residue protein sequence, read N- to C-terminus: C-type lectin domain family 14 member A (459 aa).

The N-terminal stretch at Met-1 to Gly-21 is a signal peptide. Topologically, residues Glu-22–Thr-386 are extracellular. Positions Ala-33–Tyr-173 constitute a C-type lectin domain. A disulfide bridge connects residues Cys-143 and Cys-162. The N-linked (GlcNAc...) asparagine glycan is linked to Asn-189. The region spanning Pro-246 to Glu-288 is the EGF-like domain. Asn-306, Asn-317, and Asn-370 each carry an N-linked (GlcNAc...) asparagine glycan. A helical transmembrane segment spans residues Val-387–Leu-407. Residues Gly-408–Ala-459 are Cytoplasmic-facing. Ser-440 is modified (phosphoserine).

The protein resides in the membrane. This Mus musculus (Mouse) protein is C-type lectin domain family 14 member A (Clec14a).